The primary structure comprises 433 residues: GTPase Der (433 aa).

EngA-type G domains lie at Asn-3 to Lys-167 and Ile-175 to Thr-347. Residues Gly-9 to Ser-16, Asp-56 to Leu-60, Asn-119 to Asp-122, Gly-181 to Ser-188, Asp-228 to Val-232, and Asn-293 to Asp-296 contribute to the GTP site. The region spanning Lys-348–Glu-432 is the KH-like domain.

This sequence belongs to the TRAFAC class TrmE-Era-EngA-EngB-Septin-like GTPase superfamily. EngA (Der) GTPase family. As to quaternary structure, associates with the 50S ribosomal subunit.

Functionally, GTPase that plays an essential role in the late steps of ribosome biogenesis. The protein is GTPase Der of Aquifex aeolicus (strain VF5).